The chain runs to 579 residues: Probable pectinesterase/pectinesterase inhibitor 7 (579 aa).

The N-terminal stretch at M1–A20 is a signal peptide. The pectinesterase inhibitor 7 stretch occupies residues S22 to L185. 8 N-linked (GlcNAc...) asparagine glycosylation sites follow: N27, N115, N174, N274, N277, N287, N326, and N333. The segment at V265–D564 is pectinesterase 7. A substrate-binding site is contributed by T342. N359 carries an N-linked (GlcNAc...) asparagine glycan. Q372 serves as a coordination point for substrate. The active-site Proton donor; for pectinesterase activity is D395. C409 and C429 form a disulfide bridge. D416 serves as the catalytic Nucleophile; for pectinesterase activity. 2 N-linked (GlcNAc...) asparagine glycosylation sites follow: N462 and N475. 2 residues coordinate substrate: R484 and W486. 4 N-linked (GlcNAc...) asparagine glycosylation sites follow: N526, N533, N547, and N553.

This sequence in the N-terminal section; belongs to the PMEI family. In the C-terminal section; belongs to the pectinesterase family. As to expression, expressed in siliques.

Its subcellular location is the secreted. It is found in the cell wall. It catalyses the reaction [(1-&gt;4)-alpha-D-galacturonosyl methyl ester](n) + n H2O = [(1-&gt;4)-alpha-D-galacturonosyl](n) + n methanol + n H(+). The protein operates within glycan metabolism; pectin degradation; 2-dehydro-3-deoxy-D-gluconate from pectin: step 1/5. Functionally, acts in the modification of cell walls via demethylesterification of cell wall pectin. The sequence is that of Probable pectinesterase/pectinesterase inhibitor 7 (PME7) from Arabidopsis thaliana (Mouse-ear cress).